We begin with the raw amino-acid sequence, 339 residues long: Serine/arginine-rich splicing factor 6 (339 aa).

The RRM 1 domain occupies 2–72 (PRVYIGRLSY…ERVIVEHARG (71 aa)). 3 positions are modified to phosphoserine: serine 45, serine 81, and serine 84. Positions 75-103 (RDRDGYSYGSRSGGGGYSSRRTSGRDKYG) are disordered. Residues 110 to 183 (YRLIVENLSS…RNIRLIEDKP (74 aa)) form the RRM 2 domain. An N6-acetyllysine modification is found at lysine 165. Positions 176-339 (IRLIEDKPRT…RSRSRSSSRD (164 aa)) are disordered. Lysine 182 is covalently cross-linked (Glycyl lysine isopeptide (Lys-Gly) (interchain with G-Cter in SUMO2)). Over residues 185 to 250 (TSHRRSYSGS…RKSRSKSKSK (66 aa)) the composition is skewed to basic residues. Residues 280 to 291 (SPKENGKGDIKS) are compositionally biased toward basic and acidic residues. A phosphoserine mark is found at serine 297 and serine 299. Position 303 is a phosphoserine; by DYRK1A (serine 303). Phosphoserine occurs at positions 314 and 316. Residues 321–339 (RASRSRSRSRSRSRSSSRD) show a composition bias toward basic residues.

Belongs to the splicing factor SR family. In terms of assembly, binds SREK1/SFRS12. Interacts with DYRK1A. Interacts with RBMY; the interaction inhibits SRSF6 pre-mRNA splicing. In terms of processing, extensively phosphorylated on serine residues in the RS domain. Phosphorylated by DYRK1A, probably in the RS domain. Phosphorylation by DYRK1A modulates alternative splice site selection and inhibits the expression of MAPT/Tau exon 10.

It localises to the nucleus. Its subcellular location is the nucleus speckle. Functionally, plays a role in constitutive splicing and modulates the selection of alternative splice sites. Plays a role in the alternative splicing of MAPT/Tau exon 10. Binds to alternative exons of TNC pre-mRNA and promotes the expression of alternatively spliced TNC. Plays a role in wound healing and in the regulation of keratinocyte differentiation and proliferation via its role in alternative splicing. This Mus musculus (Mouse) protein is Serine/arginine-rich splicing factor 6 (Srsf6).